Reading from the N-terminus, the 159-residue chain is Ribosomal RNA large subunit methyltransferase H (159 aa).

S-adenosyl-L-methionine is bound by residues L76, G108, and 127-132 (FGKLTL).

Belongs to the RNA methyltransferase RlmH family. As to quaternary structure, homodimer.

It is found in the cytoplasm. It catalyses the reaction pseudouridine(1915) in 23S rRNA + S-adenosyl-L-methionine = N(3)-methylpseudouridine(1915) in 23S rRNA + S-adenosyl-L-homocysteine + H(+). In terms of biological role, specifically methylates the pseudouridine at position 1915 (m3Psi1915) in 23S rRNA. The chain is Ribosomal RNA large subunit methyltransferase H from Streptococcus sanguinis (strain SK36).